The following is a 156-amino-acid chain: Small ribosomal subunit protein uS7 (156 aa).

The protein belongs to the universal ribosomal protein uS7 family. Part of the 30S ribosomal subunit. Contacts proteins S9 and S11.

Functionally, one of the primary rRNA binding proteins, it binds directly to 16S rRNA where it nucleates assembly of the head domain of the 30S subunit. Is located at the subunit interface close to the decoding center, probably blocks exit of the E-site tRNA. This Bacillus cereus (strain G9842) protein is Small ribosomal subunit protein uS7.